Consider the following 424-residue polypeptide: UDP-N-acetylglucosamine 1-carboxyvinyltransferase (424 aa).

22–23 (KN) lines the phosphoenolpyruvate pocket. Residue R93 coordinates UDP-N-acetyl-alpha-D-glucosamine. C117 acts as the Proton donor in catalysis. C117 bears the 2-(S-cysteinyl)pyruvic acid O-phosphothioketal mark. UDP-N-acetyl-alpha-D-glucosamine-binding positions include 122 to 126 (RPIDL), D307, and V329.

It belongs to the EPSP synthase family. MurA subfamily.

The protein resides in the cytoplasm. It catalyses the reaction phosphoenolpyruvate + UDP-N-acetyl-alpha-D-glucosamine = UDP-N-acetyl-3-O-(1-carboxyvinyl)-alpha-D-glucosamine + phosphate. The protein operates within cell wall biogenesis; peptidoglycan biosynthesis. Functionally, cell wall formation. Adds enolpyruvyl to UDP-N-acetylglucosamine. The protein is UDP-N-acetylglucosamine 1-carboxyvinyltransferase of Chlorobium limicola (strain DSM 245 / NBRC 103803 / 6330).